The following is a 369-amino-acid chain: Glycolate oxidase 5 (369 aa).

One can recognise an FMN hydroxy acid dehydrogenase domain in the interval 1–360 (MGEITNVTEY…TRNHVITEAD (360 aa)). Y25 is a glyoxylate binding site. FMN is bound by residues 78–80 (PSA), S107, 128–130 (QLY), and T156. Y130 is a glyoxylate binding site. Residue R165 coordinates glyoxylate. FMN-binding residues include K231 and S253. Glyoxylate contacts are provided by H255 and R258. H255 acts as the Proton acceptor in catalysis. FMN contacts are provided by residues 286–290 (DGGVR) and 309–310 (GR). The short motif at 367-369 (SRL) is the Microbody targeting signal element.

The protein belongs to the FMN-dependent alpha-hydroxy acid dehydrogenase family. As to quaternary structure, homotetramer. FMN serves as cofactor.

The protein resides in the peroxisome. It carries out the reaction glycolate + O2 = glyoxylate + H2O2. It functions in the pathway photosynthesis; photorespiration; glycine from 2-phosphoglycolate: step 2/3. Functionally, catalyzes the oxidation of glycolate to glyoxylate, with a reduction of O2 to H2O2. Is a key enzyme in photorespiration in green plants. The polypeptide is Glycolate oxidase 5 (GLO5) (Oryza sativa subsp. japonica (Rice)).